A 123-amino-acid polypeptide reads, in one-letter code: Large ribosomal subunit protein bL12 (123 aa).

It belongs to the bacterial ribosomal protein bL12 family. As to quaternary structure, homodimer. Part of the ribosomal stalk of the 50S ribosomal subunit. Forms a multimeric L10(L12)X complex, where L10 forms an elongated spine to which 2 to 4 L12 dimers bind in a sequential fashion. Binds GTP-bound translation factors.

In terms of biological role, forms part of the ribosomal stalk which helps the ribosome interact with GTP-bound translation factors. Is thus essential for accurate translation. This Rhodopseudomonas palustris (strain BisA53) protein is Large ribosomal subunit protein bL12.